We begin with the raw amino-acid sequence, 672 residues long: Zinc finger and BTB domain-containing protein 24 (672 aa).

The BTB domain occupies 39–105 (CDITLIVEDV…MYSAVVLVDE (67 aa)). Residues 136-208 (HMQVKRKRGR…GKRKIKQPIR (73 aa)) are disordered. The a.T hook 1 DNA-binding region spans 140 to 152 (KRKRGRPKKNQDL). Basic and acidic residues predominate over residues 148–158 (KNQDLSQKENP). Polar residues predominate over residues 160-171 (SELQAQTSSEIQ). Positions 198–208 (EGKRKIKQPIR) are enriched in basic residues. The segment at residues 223–235 (PGKRGRRRKYPDT) is a DNA-binding region (a.T hook 2). C2H2-type zinc fingers lie at residues 237–259 (ARCE…QRTH), 265–287 (FRCS…QRMH), 293–315 (YICT…MNLH), 321–343 (FTCE…NRVH), 349–371 (PECA…LRTH), 377–399 (FTCE…IRIH), 405–427 (YVCK…EVSH), and 433–455 (FSCS…IKTH). Positions 453–492 (KTHNKENPPAQAESTDKPPQSAPEQQEQEQQQQQQTSGDK) are disordered. Positions 476-487 (EQQEQEQQQQQQ) are enriched in low complexity.

Belongs to the krueppel C2H2-type zinc-finger protein family.

It is found in the nucleus. Functionally, may be involved in BMP2-induced transcription. In Danio rerio (Zebrafish), this protein is Zinc finger and BTB domain-containing protein 24 (zbtb24).